Consider the following 306-residue polypeptide: MPESQSPNSSTNAPVTGTTHVKRGMAEMLKGGVIMDVVTPEQARIAEDAGAVAVMALERVPADIRAQGGVSRMSDPDMIDGIMQAVSIPVMAKARIGHFVEAQILQSLGVDYVDESEVLTPADYANHVDKWAFTVPFVCGATNLGEALRRITEGAAMIRSKGEAGTGDVSNATTHMRGIRTEIRRLQSLPADELYVAAKELQAPYELVREIAETGKLPVVLFTAGGIATPADAAMMMQLGAEGVFVGSGIFKSGNPAERAAAIVKATTFHDDPEVLAKVSRGLGEAMVGINVDQIPQSDRLAERGR.

D36 is a binding site for D-ribose 5-phosphate. K93 (schiff-base intermediate with D-ribose 5-phosphate) is an active-site residue. G165 contacts D-ribose 5-phosphate. R177 is a D-glyceraldehyde 3-phosphate binding site. Residues G226 and 247 to 248 (GS) contribute to the D-ribose 5-phosphate site.

This sequence belongs to the PdxS/SNZ family. As to quaternary structure, in the presence of PdxT, forms a dodecamer of heterodimers.

It catalyses the reaction aldehydo-D-ribose 5-phosphate + D-glyceraldehyde 3-phosphate + L-glutamine = pyridoxal 5'-phosphate + L-glutamate + phosphate + 3 H2O + H(+). Its pathway is cofactor biosynthesis; pyridoxal 5'-phosphate biosynthesis. Catalyzes the formation of pyridoxal 5'-phosphate from ribose 5-phosphate (RBP), glyceraldehyde 3-phosphate (G3P) and ammonia. The ammonia is provided by the PdxT subunit. Can also use ribulose 5-phosphate and dihydroxyacetone phosphate as substrates, resulting from enzyme-catalyzed isomerization of RBP and G3P, respectively. This chain is Pyridoxal 5'-phosphate synthase subunit PdxS, found in Salinispora arenicola (strain CNS-205).